Reading from the N-terminus, the 266-residue chain is Imidazole glycerol phosphate synthase subunit HisF (266 aa).

Active-site residues include aspartate 11 and aspartate 130.

The protein belongs to the HisA/HisF family. Heterodimer of HisH and HisF.

The protein resides in the cytoplasm. It catalyses the reaction 5-[(5-phospho-1-deoxy-D-ribulos-1-ylimino)methylamino]-1-(5-phospho-beta-D-ribosyl)imidazole-4-carboxamide + L-glutamine = D-erythro-1-(imidazol-4-yl)glycerol 3-phosphate + 5-amino-1-(5-phospho-beta-D-ribosyl)imidazole-4-carboxamide + L-glutamate + H(+). The protein operates within amino-acid biosynthesis; L-histidine biosynthesis; L-histidine from 5-phospho-alpha-D-ribose 1-diphosphate: step 5/9. IGPS catalyzes the conversion of PRFAR and glutamine to IGP, AICAR and glutamate. The HisF subunit catalyzes the cyclization activity that produces IGP and AICAR from PRFAR using the ammonia provided by the HisH subunit. This is Imidazole glycerol phosphate synthase subunit HisF from Delftia acidovorans (strain DSM 14801 / SPH-1).